Consider the following 92-residue polypeptide: UPF0223 protein SZO_10560 (92 aa).

This sequence belongs to the UPF0223 family.

In Streptococcus equi subsp. zooepidemicus (strain H70), this protein is UPF0223 protein SZO_10560.